Here is a 621-residue protein sequence, read N- to C-terminus: KIF-binding protein (621 aa).

The interval 51 to 75 (GPAPEDEDERPEAEDGPGAGDHALG) is disordered. Positions 54-65 (PEDEDERPEAED) are enriched in acidic residues. The residue at position 178 (serine 178) is a Phosphoserine.

Belongs to the KIF-binding protein family. Interacts with KIF1B; positively regulates KIF1B microtubule motor activity. Interacts with STMN2. Highly expressed in heart, brain, ovary, testis, spinal cord and all specific brain regions examined. Moderate expressed at intermediate level in all other adult tissues examined, as well as in fetal liver and brain. Not expressed in blood leukocytes.

The protein localises to the cytoplasm. The protein resides in the cytoskeleton. Functionally, activator of KIF1B plus-end-directed microtubule motor activity. Required for organization of axonal microtubules, and axonal outgrowth and maintenance during peripheral and central nervous system development. This Homo sapiens (Human) protein is KIF-binding protein.